The chain runs to 82 residues: Sodium channel neurotoxin MeuNaTxalpha-3 (82 aa).

A signal peptide spans 1 to 8 (LVMAGVES). The 71-residue stretch at 10 to 80 (RDGHIARNNN…VPIKVPGDCH (71 aa)) folds into the LCN-type CS-alpha/beta domain. Intrachain disulfides connect cysteine 20–cysteine 79, cysteine 24–cysteine 52, cysteine 38–cysteine 62, and cysteine 42–cysteine 64.

Expressed by the venom gland.

The protein localises to the secreted. Alpha toxins bind voltage-independently at site-3 of sodium channels (Nav) and inhibit the inactivation of the activated channels, thereby blocking neuronal transmission. This chain is Sodium channel neurotoxin MeuNaTxalpha-3, found in Mesobuthus eupeus (Lesser Asian scorpion).